Consider the following 479-residue polypeptide: Kynurenine 3-monooxygenase (479 aa).

FAD-binding positions include valine 19, 37 to 40 (YEAR), and alanine 57. The L-kynurenine site is built by arginine 85 and tyrosine 99. FAD contacts are provided by residues arginine 111, leucine 136, threonine 172, aspartate 304, and 317–318 (MN). 2 residues coordinate L-kynurenine: asparagine 363 and tyrosine 398. A run of 2 helical transmembrane segments spans residues 385 to 404 (FLHAIMPSTFIPLYTMVAFT) and 425 to 445 (GLFVLGSLIAIGGTYLLVHHL).

The protein belongs to the aromatic-ring hydroxylase family. KMO subfamily. FAD serves as cofactor. In terms of tissue distribution, expressed by organs containing secondary lymphoid tissue, such as the lung, spleen, mesenteric lymph node, thymus and peripheral lymph nodes.

The protein localises to the mitochondrion outer membrane. It carries out the reaction L-kynurenine + NADPH + O2 + H(+) = 3-hydroxy-L-kynurenine + NADP(+) + H2O. It participates in cofactor biosynthesis; NAD(+) biosynthesis; quinolinate from L-kynurenine: step 1/3. Functionally, catalyzes the hydroxylation of L-kynurenine (L-Kyn) to form 3-hydroxy-L-kynurenine (L-3OHKyn). Required for synthesis of quinolinic acid, a neurotoxic NMDA receptor antagonist and potential endogenous inhibitor of NMDA receptor signaling in axonal targeting, synaptogenesis and apoptosis during brain development. Quinolinic acid may also affect NMDA receptor signaling in pancreatic beta cells, osteoblasts, myocardial cells, and the gastrointestinal tract. This Mus musculus (Mouse) protein is Kynurenine 3-monooxygenase.